Here is a 568-residue protein sequence, read N- to C-terminus: Sulfate adenylyltransferase (568 aa).

Positions 1–162 are N-terminal; it reads MANSPHGGVL…IEAVNKLNHY (162 aa). Positions 163 to 388 are catalytic; it reads DYVALRYSPA…LRESSPPRAT (226 aa). Gln190 serves as a coordination point for sulfate. Residues 190 to 193 and 284 to 287 each bind ATP; these read QTRN and GRDH. Residues Thr191, Arg192, and Asn193 contribute to the active site. Position 192 (Arg192) interacts with sulfate. Ala288 serves as a coordination point for sulfate. Residue Val326 coordinates ATP. Positions 389 to 568 are allosteric regulation domain; adenylyl-sulfate kinase-like; the sequence is QGFTIFLTGY…LESEGYFDRL (180 aa). 3'-phosphoadenylyl sulfate is bound by residues 428–431, Arg445, 471–472, and Arg510; these read DTVR and IA.

It in the N-terminal section; belongs to the sulfate adenylyltransferase family. The protein in the C-terminal section; belongs to the APS kinase family. In terms of assembly, homohexamer. Dimer of trimers.

The protein resides in the cytoplasm. It carries out the reaction sulfate + ATP + H(+) = adenosine 5'-phosphosulfate + diphosphate. It functions in the pathway sulfur metabolism; hydrogen sulfide biosynthesis; sulfite from sulfate: step 1/3. Allosterically inhibited by 3'-phosphoadenosine 5'-phosphosulfate (PAPS). Its function is as follows. Catalyzes the first intracellular reaction of sulfate assimilation, forming adenosine-5'-phosphosulfate (APS) from inorganic sulfate and ATP. Plays an important role in sulfate activation as a component of the biosynthesis pathway of sulfur-containing amino acids. The chain is Sulfate adenylyltransferase from Aspergillus terreus.